A 342-amino-acid chain; its full sequence is MNENEYDNFDDLDDLLDEDPTKLDEAEPDDVQAKGSVYNDSENKEKNAESKDSDGVQVANESEEDPELKEMMVDLQNEFANLMKNNGNENNVKTEDFNKLISALEEAAKVPHQQMEQGCSSLKSNSTDKGTVNGSNPGFKNIVSNTLDRLKENGNKVDTSLAEETKESQRSGQNNNIDDILSQLLDQMVASGGKESAENQFDLKDGEMDDAITKILDQMTSKEVLYEPMKEMRSEFGVWFQENGENEEHKEKIGTYKRQFNIVDEIVNIYELKDYDELKHKDRVTELLDELEQLGDSPIRSANSPLKHGNEEEELMKMLEIDGNDPNLGNLDKELTDGCKQQ.

The segment covering 1 to 18 has biased composition (acidic residues); sequence MNENEYDNFDDLDDLLDE. Disordered regions lie at residues 1 to 68 and 119 to 141; these read MNEN…DPEL and CSSL…GFKN. Residues 41-54 show a composition bias toward basic and acidic residues; sequence SENKEKNAESKDSD. At serine 62 the chain carries Phosphoserine. Phosphoserine is present on serine 304. Residues 321 to 342 form a disordered region; the sequence is IDGNDPNLGNLDKELTDGCKQQ. Residues 331–342 are compositionally biased toward basic and acidic residues; it reads LDKELTDGCKQQ. Cysteine 339 is modified (cysteine methyl ester). Cysteine 339 carries S-farnesyl cysteine lipidation. The propeptide at 340–342 is removed in mature form; the sequence is KQQ.

It belongs to the peroxin-19 family. In terms of assembly, interacts (farnesylated) with PEX3; farnesylation is required for this interaction. Interacts with PEX2, PEX5, PEX10, PEX11, PEX12, PEX13, PEX14, PEX17, PEX22, PEX25, PEX30 and PEX32; the interaction requires well-defined PEX19-binding sites within the peroxisomal membrane protein targeting signal (mPTS) of the PMPs and is independent on the presence of PEX3. Interacts with VPS1.

Its subcellular location is the cytoplasm. It is found in the peroxisome membrane. The protein localises to the endoplasmic reticulum membrane. Required for proper post-translational import and stabilization of peroxisomal membrane proteins (PMPs). Acts as a cytosolic import receptor for PMPs and delivers them to the docking factor PEX3 at the peroxisomal membrane for subsequent insertion into the membrane. Acts as a chaperone in stabilizing or maintaining PMPs in the lipid bilayer. Directs PEX17, a peripheral component of the peroxisomal matrix protein translocation machinery, to peroxisomes. Stabilizes VPS1, a protein required for peroxisomal fission, at the peroxisomal membrane. Also acts in conjunction with PEX3 in the formation of peroxisomes from preperoxisomal compartments at the endoplasmic reticulum during de novo peroxisome synthesis, probably via the import of additional PMPs. The sequence is that of Peroxisomal membrane protein import receptor PEX19 (PEX19) from Saccharomyces cerevisiae (strain ATCC 204508 / S288c) (Baker's yeast).